A 666-amino-acid chain; its full sequence is tRNA 5-methylaminomethyl-2-thiouridine biosynthesis bifunctional protein MnmC (666 aa).

The interval 1 to 253 (MSSPFAPIIT…KRHMLCAYYE (253 aa)) is tRNA (mnm(5)s(2)U34)-methyltransferase. The FAD-dependent cmnm(5)s(2)U34 oxidoreductase stretch occupies residues 283-666 (VGGGLAGCFI…FLRKKIIQGP (384 aa)).

This sequence in the N-terminal section; belongs to the methyltransferase superfamily. tRNA (mnm(5)s(2)U34)-methyltransferase family. In the C-terminal section; belongs to the DAO family. FAD is required as a cofactor.

Its subcellular location is the cytoplasm. The enzyme catalyses 5-aminomethyl-2-thiouridine(34) in tRNA + S-adenosyl-L-methionine = 5-methylaminomethyl-2-thiouridine(34) in tRNA + S-adenosyl-L-homocysteine + H(+). In terms of biological role, catalyzes the last two steps in the biosynthesis of 5-methylaminomethyl-2-thiouridine (mnm(5)s(2)U) at the wobble position (U34) in tRNA. Catalyzes the FAD-dependent demodification of cmnm(5)s(2)U34 to nm(5)s(2)U34, followed by the transfer of a methyl group from S-adenosyl-L-methionine to nm(5)s(2)U34, to form mnm(5)s(2)U34. The protein is tRNA 5-methylaminomethyl-2-thiouridine biosynthesis bifunctional protein MnmC of Legionella pneumophila (strain Corby).